The sequence spans 710 residues: Adenylosuccinate synthetase (710 aa).

Disordered stretches follow at residues methionine 1 to lysine 57 and methionine 82 to cysteine 112. The span at asparagine 11 to serine 25 shows a compositional bias: low complexity. A compositionally biased stretch (polar residues) spans serine 32 to serine 43. Residues glycine 180 to lysine 186 and glycine 210 to threonine 212 contribute to the GTP site. Catalysis depends on aspartate 181, which acts as the Proton acceptor. 2 residues coordinate Mg(2+): aspartate 181 and glycine 210. IMP contacts are provided by residues aspartate 181–lysine 184, asparagine 208–histidine 211, threonine 295, lysine 309, glutamine 421, threonine 437, and lysine 567. The active-site Proton donor is the histidine 211. Residue alanine 563–arginine 569 participates in substrate binding. GTP is bound by residues arginine 569 and glycine 697–glycine 699.

This sequence belongs to the adenylosuccinate synthetase family. Homodimer. Mg(2+) serves as cofactor.

The protein localises to the cytoplasm. It carries out the reaction IMP + L-aspartate + GTP = N(6)-(1,2-dicarboxyethyl)-AMP + GDP + phosphate + 2 H(+). The protein operates within purine metabolism; AMP biosynthesis via de novo pathway; AMP from IMP: step 1/2. Functionally, plays an important role in the salvage pathway for purine nucleotide biosynthesis. Catalyzes the first committed step in the biosynthesis of AMP from IMP. The polypeptide is Adenylosuccinate synthetase (Leishmania braziliensis).